The sequence spans 338 residues: Glycerol-3-phosphate dehydrogenase [NAD(P)+] (338 aa).

NADPH contacts are provided by Ser-18, Tyr-19, His-39, and Lys-113. Positions 113, 142, and 144 each coordinate sn-glycerol 3-phosphate. Position 146 (Ala-146) interacts with NADPH. Positions 198, 251, 261, 262, and 263 each coordinate sn-glycerol 3-phosphate. Lys-198 functions as the Proton acceptor in the catalytic mechanism. NADPH is bound at residue Arg-262. NADPH-binding residues include Val-286 and Glu-288.

It belongs to the NAD-dependent glycerol-3-phosphate dehydrogenase family.

The protein resides in the cytoplasm. The enzyme catalyses sn-glycerol 3-phosphate + NAD(+) = dihydroxyacetone phosphate + NADH + H(+). The catalysed reaction is sn-glycerol 3-phosphate + NADP(+) = dihydroxyacetone phosphate + NADPH + H(+). It functions in the pathway membrane lipid metabolism; glycerophospholipid metabolism. In terms of biological role, catalyzes the reduction of the glycolytic intermediate dihydroxyacetone phosphate (DHAP) to sn-glycerol 3-phosphate (G3P), the key precursor for phospholipid synthesis. This Photobacterium profundum (strain SS9) protein is Glycerol-3-phosphate dehydrogenase [NAD(P)+].